The sequence spans 58 residues: uncharacterized protein (58 aa).

The chain crosses the membrane as a helical span at residues 5 to 27; the sequence is FLHANITIIPHSVLYVSLSYYII.

Its subcellular location is the membrane. This is an uncharacterized protein from Saccharomyces cerevisiae (strain ATCC 204508 / S288c) (Baker's yeast).